Here is a 216-residue protein sequence, read N- to C-terminus: Methylthioribulose-1-phosphate dehydratase (216 aa).

Positions 101 and 103 each coordinate Zn(2+).

It belongs to the aldolase class II family. MtnB subfamily. Zn(2+) is required as a cofactor.

The enzyme catalyses 5-(methylsulfanyl)-D-ribulose 1-phosphate = 5-methylsulfanyl-2,3-dioxopentyl phosphate + H2O. Its pathway is amino-acid biosynthesis; L-methionine biosynthesis via salvage pathway; L-methionine from S-methyl-5-thio-alpha-D-ribose 1-phosphate: step 2/6. Catalyzes the dehydration of methylthioribulose-1-phosphate (MTRu-1-P) into 2,3-diketo-5-methylthiopentyl-1-phosphate (DK-MTP-1-P). This chain is Methylthioribulose-1-phosphate dehydratase, found in Bradyrhizobium sp. (strain BTAi1 / ATCC BAA-1182).